A 268-amino-acid polypeptide reads, in one-letter code: ELL-associated factor 1 (268 aa).

The disordered stretch occupies residues 106 to 268 (IQVKKTRAEG…LSESGSDSDD (163 aa)). A compositionally biased stretch (pro residues) spans 128-154 (TRPPQTSQPPPPPPPMPFRAPTKPPVG). S165 is modified (phosphoserine). Residues 171–181 (DDIKRELRAEV) show a composition bias toward basic and acidic residues. A necessary for transactivation activity region spans residues 182–262 (DIIEQMSSSS…LRNDLQLSES (81 aa)). A compositionally biased stretch (low complexity) spans 188–213 (SSSSGSSSSDSESSSGSDDDSSSSGG). Residues 238–268 (NGTSRPQGSNQLMNTLRNDLQLSESGSDSDD) are compositionally biased toward polar residues.

The protein belongs to the EAF family. As to quaternary structure, component of the super elongation complex (SEC), at least composed of EAF1, EAF2, CDK9, MLLT3/AF9, AFF (AFF1 or AFF4), the P-TEFb complex and ELL (ELL, ELL2 or ELL3). Interacts with ELL and ELL2. In terms of tissue distribution, strongly expressed in heart, brain, placenta, lung, liver, skeletal muscle, kidney, pancreas, spleen, prostate, testis, small intestine and colon. Poorly expressed in thymus.

It is found in the nucleus speckle. It localises to the nucleus. The protein resides in the cajal body. In terms of biological role, acts as a transcriptional transactivator of ELL and ELL2 elongation activities. This is ELL-associated factor 1 (EAF1) from Homo sapiens (Human).